The following is a 374-amino-acid chain: Putative zinc metalloprotease R01501 (374 aa).

His-26 provides a ligand contact to Zn(2+). Residue Glu-27 is part of the active site. His-30 lines the Zn(2+) pocket. Transmembrane regions (helical) follow at residues 36–55, 112–134, 301–323, and 348–367; these read WSGIRILAFSVGFGPELFGW, AATVAAGPIANFLLAIAIFAVLF, VLNFAAVLSVSIGLLNLMPVPVL, and LAFRIGFAMVLMLTVFAAWN. A PDZ domain is found at 126-199; it reads AIAIFAVLFS…LPITVRIERE (74 aa).

It belongs to the peptidase M50B family. It depends on Zn(2+) as a cofactor.

It localises to the cell inner membrane. In Rhizobium meliloti (strain 1021) (Ensifer meliloti), this protein is Putative zinc metalloprotease R01501.